Here is a 255-residue protein sequence, read N- to C-terminus: Triosephosphate isomerase (255 aa).

Residue 9–11 (NWK) coordinates substrate. Catalysis depends on histidine 95, which acts as the Electrophile. Residue glutamate 167 is the Proton acceptor of the active site. Substrate-binding positions include glycine 173, serine 212, and 233–234 (GG).

It belongs to the triosephosphate isomerase family. As to quaternary structure, homodimer.

It localises to the cytoplasm. It catalyses the reaction D-glyceraldehyde 3-phosphate = dihydroxyacetone phosphate. Its pathway is carbohydrate biosynthesis; gluconeogenesis. The protein operates within carbohydrate degradation; glycolysis; D-glyceraldehyde 3-phosphate from glycerone phosphate: step 1/1. Functionally, involved in the gluconeogenesis. Catalyzes stereospecifically the conversion of dihydroxyacetone phosphate (DHAP) to D-glyceraldehyde-3-phosphate (G3P). This Klebsiella pneumoniae protein is Triosephosphate isomerase.